The sequence spans 545 residues: Gamma-curcumene synthase (545 aa).

Positions 299, 303, 442, and 450 each coordinate Mg(2+). Residues 299–303 (DDTYD) carry the DDXXD motif motif.

It belongs to the terpene synthase family. Mg(2+) serves as cofactor.

It localises to the cytoplasm. It is found in the cytosol. The enzyme catalyses (2E,6E)-farnesyl diphosphate = gamma-curcumene + diphosphate. It participates in secondary metabolite biosynthesis; terpenoid biosynthesis. Sesquiterpene synthase involved in gamma-curcumene biosynthesis. The polypeptide is Gamma-curcumene synthase (Pogostemon cablin (Patchouli)).